Here is a 208-residue protein sequence, read N- to C-terminus: Small ribosomal subunit protein uS4 (208 aa).

One can recognise an S4 RNA-binding domain in the interval 98–160; sequence RRLDNVVYRL…SKSKTRFVEI (63 aa).

This sequence belongs to the universal ribosomal protein uS4 family. In terms of assembly, part of the 30S ribosomal subunit. Contacts protein S5. The interaction surface between S4 and S5 is involved in control of translational fidelity.

Functionally, one of the primary rRNA binding proteins, it binds directly to 16S rRNA where it nucleates assembly of the body of the 30S subunit. With S5 and S12 plays an important role in translational accuracy. This is Small ribosomal subunit protein uS4 from Caldicellulosiruptor bescii (strain ATCC BAA-1888 / DSM 6725 / KCTC 15123 / Z-1320) (Anaerocellum thermophilum).